We begin with the raw amino-acid sequence, 540 residues long: Chaperonin GroEL (540 aa).

Residues 29–32 (TIGP), 86–90 (DGTTT), G413, 476–478 (NAA), and D492 contribute to the ATP site.

This sequence belongs to the chaperonin (HSP60) family. In terms of assembly, forms a cylinder of 14 subunits composed of two heptameric rings stacked back-to-back. Interacts with the co-chaperonin GroES.

It is found in the cytoplasm. The enzyme catalyses ATP + H2O + a folded polypeptide = ADP + phosphate + an unfolded polypeptide.. Its function is as follows. Together with its co-chaperonin GroES, plays an essential role in assisting protein folding. The GroEL-GroES system forms a nano-cage that allows encapsulation of the non-native substrate proteins and provides a physical environment optimized to promote and accelerate protein folding. This Staphylococcus carnosus (strain TM300) protein is Chaperonin GroEL.